Consider the following 196-residue polypeptide: Protein GrpE (196 aa).

The disordered stretch occupies residues 1–41; it reads MSSKEQKTPEGQAPEEIITEQHDDVEAVEPEVSAEQVDPRD.

The protein belongs to the GrpE family. As to quaternary structure, homodimer.

The protein resides in the cytoplasm. Functionally, participates actively in the response to hyperosmotic and heat shock by preventing the aggregation of stress-denatured proteins, in association with DnaK and GrpE. It is the nucleotide exchange factor for DnaK and may function as a thermosensor. Unfolded proteins bind initially to DnaJ; upon interaction with the DnaJ-bound protein, DnaK hydrolyzes its bound ATP, resulting in the formation of a stable complex. GrpE releases ADP from DnaK; ATP binding to DnaK triggers the release of the substrate protein, thus completing the reaction cycle. Several rounds of ATP-dependent interactions between DnaJ, DnaK and GrpE are required for fully efficient folding. In Klebsiella pneumoniae (strain 342), this protein is Protein GrpE.